Here is an 80-residue protein sequence, read N- to C-terminus: MYKKYTIGTVISNKMNKTITVAVKNKAQHLRYKKIITKTNKYYAHDEHNQCYIGDIVKIRPYRPLSKKKRWILIERIIEK.

The protein belongs to the universal ribosomal protein uS17 family. As to quaternary structure, part of the 30S ribosomal subunit.

It localises to the plastid. The protein localises to the chloroplast. In terms of biological role, one of the primary rRNA binding proteins, it binds specifically to the 5'-end of 16S ribosomal RNA. In Gracilaria tenuistipitata var. liui (Red alga), this protein is Small ribosomal subunit protein uS17c (rps17).